The chain runs to 388 residues: Succinate--CoA ligase [ADP-forming] subunit beta (388 aa).

The ATP-grasp domain occupies 9-245; that stretch reads KELLKSYGLP…KSQENERELK (237 aa). ATP contacts are provided by residues lysine 46, 53-55, glutamate 100, tyrosine 103, and glutamate 108; that span reads GRG. Mg(2+) contacts are provided by asparagine 200 and aspartate 214. Residues asparagine 265 and 322–324 contribute to the substrate site; that span reads GIV.

This sequence belongs to the succinate/malate CoA ligase beta subunit family. As to quaternary structure, heterotetramer of two alpha and two beta subunits. The cofactor is Mg(2+).

It carries out the reaction succinate + ATP + CoA = succinyl-CoA + ADP + phosphate. The catalysed reaction is GTP + succinate + CoA = succinyl-CoA + GDP + phosphate. It functions in the pathway carbohydrate metabolism; tricarboxylic acid cycle; succinate from succinyl-CoA (ligase route): step 1/1. Functionally, succinyl-CoA synthetase functions in the citric acid cycle (TCA), coupling the hydrolysis of succinyl-CoA to the synthesis of either ATP or GTP and thus represents the only step of substrate-level phosphorylation in the TCA. The beta subunit provides nucleotide specificity of the enzyme and binds the substrate succinate, while the binding sites for coenzyme A and phosphate are found in the alpha subunit. In Psychrobacter cryohalolentis (strain ATCC BAA-1226 / DSM 17306 / VKM B-2378 / K5), this protein is Succinate--CoA ligase [ADP-forming] subunit beta.